A 443-amino-acid chain; its full sequence is ATP-dependent protease ATPase subunit HslU (443 aa).

Residues isoleucine 18 and 60–65 (GVGKTE) contribute to the ATP site. Positions 142-162 (LGFEASPSEESNATRQKFRKK) are disordered. ATP is bound by residues aspartate 256, glutamate 321, and arginine 393.

It belongs to the ClpX chaperone family. HslU subfamily. As to quaternary structure, a double ring-shaped homohexamer of HslV is capped on each side by a ring-shaped HslU homohexamer. The assembly of the HslU/HslV complex is dependent on binding of ATP.

Its subcellular location is the cytoplasm. In terms of biological role, ATPase subunit of a proteasome-like degradation complex; this subunit has chaperone activity. The binding of ATP and its subsequent hydrolysis by HslU are essential for unfolding of protein substrates subsequently hydrolyzed by HslV. HslU recognizes the N-terminal part of its protein substrates and unfolds these before they are guided to HslV for hydrolysis. The sequence is that of ATP-dependent protease ATPase subunit HslU from Nitrosomonas europaea (strain ATCC 19718 / CIP 103999 / KCTC 2705 / NBRC 14298).